A 296-amino-acid polypeptide reads, in one-letter code: Myeloid differentiation primary response protein MyD88 (296 aa).

The region spanning 54–109 (MDFEYLEIRQLETQADPTGRLLDAWQGRPGASVGRLLELLTKLGRDDVLLELGPSI) is the Death domain. The segment at 110-155 (EEDCQKYILKQQQEEAEKPLQVAAVDSSVPRTAELAGITTLDDPLG) is intermediate domain. In terms of domain architecture, TIR spans 159–293 (ERFDAFICYC…WFWTRLAKAL (135 aa)). Ser-244 is modified (phosphoserine).

As to quaternary structure, homodimer. Also forms heterodimers with TIRAP. Binds to TLR2, TLR5, IRAK1, IRAK2 and IRAK4 via their respective TIR domains. Interacts with IL18R1. Interacts with BMX, IL1RL1, IKBKE and IRF7. Interacts with LRRFIP1 and LRRFIP2; this interaction positively regulates Toll-like receptor (TLR) signaling in response to agonist. Interacts with FLII. LRRFIP1 and LRRFIP2 compete with FLII for MYD88-binding. Interacts with IRF1. Upon IL1B treatment, forms a complex with PELI1, IRAK1, IRAK4 and TRAF6; this complex recruits MAP3K7/TAK1, TAB1 and TAB2 to mediate NF-kappa-B activation. Direct binding of SMAD6 to PELI1 prevents the complex formation and hence negatively regulates IL1R-TLR signaling and eventually NF-kappa-B-mediated gene expression. May interact with PIK3AP1. Interacts (via TIR domain) with DHX9 (via H2A and OB-fold regions); this interaction is direct. Interacts with OTUD4 deubiquitinase; the interaction is direct. Interacts with TLR4. In terms of assembly, (Microbial infection) In case of infection, interacts with uropathogenic E.coli protein TcpC; suppressing Toll-like receptor (TLR)-mediated cytokine production. (Microbial infection) In case of infection, interacts with uropathogenic E.faecalis protein TcpF; suppressing Toll-like receptor (TLR)-mediated cytokine production. As to quaternary structure, (Microbial infection) In case of infection, interacts with B.melitensis protein TcpB. In terms of assembly, (Microbial infection) Interacts with human metapneumovirus protein M2-2; this interaction prevents MYD88-mediated cytokine secretion. In terms of processing, ubiquitinated; undergoes 'Lys-63'-linked polyubiquitination. OTUD4 specifically hydrolyzes 'Lys-63'-linked polyubiquitinated MYD88. Deubiquitinated by USP3 that cleaves 'Lys-63'-linked ubiquitin chains leading to inhibition of MYD88-induced NF-kappa-B signaling. Post-translationally, (Microbial infection) Ubiquitinated by human herpesvirus 8 (KSHV) protein RTA/ORF50, leading to proteasomal degradation ans suppression of TLR4 signaling pathway. As to expression, ubiquitous.

It is found in the cytoplasm. Its subcellular location is the nucleus. In terms of biological role, adapter protein involved in the Toll-like receptor and IL-1 receptor signaling pathway in the innate immune response. Acts via IRAK1, IRAK2, IRF7 and TRAF6, leading to NF-kappa-B activation, cytokine secretion and the inflammatory response. Increases IL-8 transcription. Involved in IL-18-mediated signaling pathway. Activates IRF1 resulting in its rapid migration into the nucleus to mediate an efficient induction of IFN-beta, NOS2/INOS, and IL12A genes. Upon TLR8 activation by GU-rich single-stranded RNA (GU-rich RNA) derived from viruses such as SARS-CoV-2, SARS-CoV and HIV-1, induces IL1B release through NLRP3 inflammasome activation. MyD88-mediated signaling in intestinal epithelial cells is crucial for maintenance of gut homeostasis and controls the expression of the antimicrobial lectin REG3G in the small intestine. The sequence is that of Myeloid differentiation primary response protein MyD88 from Homo sapiens (Human).